A 201-amino-acid polypeptide reads, in one-letter code: Recombination protein RecR (201 aa).

Residues C57–C72 form a C4-type zinc finger. Residues G81–P176 enclose the Toprim domain.

It belongs to the RecR family.

Its function is as follows. May play a role in DNA repair. It seems to be involved in an RecBC-independent recombinational process of DNA repair. It may act with RecF and RecO. The chain is Recombination protein RecR from Glaesserella parasuis serovar 5 (strain SH0165) (Haemophilus parasuis).